The chain runs to 89 residues: Small ribosomal subunit protein uS15 (89 aa).

Positions 1–22 (MPLSKEQKQEVMEKYKLHEHDT) are disordered.

Belongs to the universal ribosomal protein uS15 family. As to quaternary structure, part of the 30S ribosomal subunit. Forms a bridge to the 50S subunit in the 70S ribosome, contacting the 23S rRNA.

Its function is as follows. One of the primary rRNA binding proteins, it binds directly to 16S rRNA where it helps nucleate assembly of the platform of the 30S subunit by binding and bridging several RNA helices of the 16S rRNA. Functionally, forms an intersubunit bridge (bridge B4) with the 23S rRNA of the 50S subunit in the ribosome. The protein is Small ribosomal subunit protein uS15 of Natranaerobius thermophilus (strain ATCC BAA-1301 / DSM 18059 / JW/NM-WN-LF).